A 643-amino-acid chain; its full sequence is Pescadillo homolog (643 aa).

Residues 305–323 (EKTKEKNHKSDNNPHEHTT) show a composition bias toward basic and acidic residues. A disordered region spans residues 305-329 (EKTKEKNHKSDNNPHEHTTNIDNNN). One can recognise a BRCT domain in the interval 378-474 (KLKELFKNHI…NILPCSDYLT (97 aa)). Positions 531 to 615 (NYKEEEEEEN…IVLSKKKRKL (85 aa)) form a coiled coil.

Belongs to the pescadillo family. Interacts with dual specificity protein phosphatase YVH1.

It localises to the nucleus. The protein localises to the nucleolus. It is found in the nucleoplasm. Functionally, required for maturation of ribosomal RNAs and formation of the large ribosomal subunit. This is Pescadillo homolog from Plasmodium falciparum (isolate 3D7).